We begin with the raw amino-acid sequence, 700 residues long: Transketolase (700 aa).

T2 is modified (N-acetylthreonine). Position 45 (H45) interacts with substrate. Residues T48, H85, 133 to 135 (GPL), and L135 each bind thiamine diphosphate. D177 is a Mg(2+) binding site. Residues G178 and N207 each coordinate thiamine diphosphate. Positions 207 and 209 each coordinate Mg(2+). Substrate contacts are provided by H283, R378, and S405. Residue H283 participates in thiamine diphosphate binding. Catalysis depends on E441, which acts as the Proton donor. A thiamine diphosphate-binding site is contributed by F467. Residues H491, D499, and R552 each contribute to the substrate site.

This sequence belongs to the transketolase family. Homodimer. It depends on Mg(2+) as a cofactor. Ca(2+) serves as cofactor. Mn(2+) is required as a cofactor. Requires Co(2+) as cofactor. The cofactor is thiamine diphosphate.

It carries out the reaction D-sedoheptulose 7-phosphate + D-glyceraldehyde 3-phosphate = aldehydo-D-ribose 5-phosphate + D-xylulose 5-phosphate. Its function is as follows. Catalyzes the reversible transfer of a two-carbon ketol group from sedoheptulose-7-phosphate to glyceraldehyde-3-phosphate, producing xylulose-5-phosphate and ribose-5-phosphate. Catalyzes the transfer of a two-carbon ketol group from a ketose donor to an aldose acceptor, via a covalent intermediate with the cofactor thiamine pyrophosphate. The chain is Transketolase (tkt) from Mycobacterium tuberculosis (strain ATCC 25618 / H37Rv).